Consider the following 392-residue polypeptide: Serpin B11 (392 aa).

An RCL region spans residues 341 to 365 (EEGTEAAAATGDSIAVKSLPMRAQF).

It belongs to the serpin family. Ov-serpin subfamily. In terms of tissue distribution, detected in a restricted number of tissues, including lung, placenta, prostate, and tonsil.

The protein localises to the cytoplasm. Has no serine protease inhibitory activity, probably due to variants in the scaffold impairing conformational change. The protein is Serpin B11 (SERPINB11) of Homo sapiens (Human).